A 494-amino-acid polypeptide reads, in one-letter code: Protein translocase subunit SecD (494 aa).

Transmembrane regions (helical) follow at residues 7 to 27 (WFAL…NLPF), 322 to 342 (LIAA…FYRL), 345 to 365 (FIAI…YALI), 372 to 392 (PGVA…VLIF), 420 to 440 (IIDG…LGTG), and 441 to 461 (FVKG…FTAL).

Belongs to the SecD/SecF family. SecD subfamily. Forms a complex with SecF. Part of the essential Sec protein translocation apparatus which comprises SecA, SecYEG and auxiliary proteins SecDF. Other proteins may also be involved.

Its subcellular location is the cell inner membrane. Its function is as follows. Part of the Sec protein translocase complex. Interacts with the SecYEG preprotein conducting channel. SecDF uses the proton motive force (PMF) to complete protein translocation after the ATP-dependent function of SecA. In terms of biological role, probably participates in protein translocation into and across both the cytoplasmic and thylakoid membranes in cyanobacterial cells. The polypeptide is Protein translocase subunit SecD (Prochlorococcus marinus (strain SARG / CCMP1375 / SS120)).